The following is a 621-amino-acid chain: Hemolysin ahh1 (621 aa).

The first 30 residues, 1 to 30 (MKNKKPRKFITQAPTLSLLALALLAGSVQA), serve as a signal peptide directing secretion. A Ricin B-type lectin domain is found at 491 to 610 (RPVNLQLGGF…QNVSVRTLTS (120 aa)).

This sequence belongs to the HlyA hemolysin family.

In terms of biological role, bacterial hemolysins are exotoxins that attack blood cell membranes and cause cell rupture by mechanisms not clearly defined. This Aeromonas hydrophila subsp. hydrophila (strain ATCC 7966 / DSM 30187 / BCRC 13018 / CCUG 14551 / JCM 1027 / KCTC 2358 / NCIMB 9240 / NCTC 8049) protein is Hemolysin ahh1 (ahh1).